Consider the following 60-residue polypeptide: Protein BNLF2a (60 aa).

Over residues 14–26 the composition is skewed to polar residues; sequence SSACGLPGSSTET. The interval 14–34 is disordered; sequence SSACGLPGSSTETRPSHPCPE. The helical transmembrane segment at 41–59 threads the bilayer; that stretch reads LRLLLVVLCVLFGLLCLLL.

This sequence belongs to the lymphocryptovirus BNLF2a family. As to quaternary structure, interacts with host TAP1 and TAP2.

The protein resides in the host endoplasmic reticulum membrane. In terms of biological role, participates in viral evasion from HLA class I-restricted T-cell immunity. Associates with host TAP1 and TAP2 and prevents TAP-mediated peptide transport and subsequent loading. The sequence is that of Protein BNLF2a from Homo sapiens (Human).